A 325-amino-acid polypeptide reads, in one-letter code: Glutarate 2-hydroxylase (325 aa).

H160, D162, and H292 together coordinate Fe cation.

It belongs to the glutarate hydroxylase family. As to quaternary structure, homotetramer. The cofactor is Fe(2+).

It carries out the reaction glutarate + 2-oxoglutarate + O2 = (S)-2-hydroxyglutarate + succinate + CO2. It participates in amino-acid degradation. Acts as an alpha-ketoglutarate-dependent dioxygenase catalyzing hydroxylation of glutarate (GA) to L-2-hydroxyglutarate (L2HG). Functions in a L-lysine degradation pathway that proceeds via cadaverine, glutarate and L-2-hydroxyglutarate. The sequence is that of Glutarate 2-hydroxylase from Shigella boydii serotype 18 (strain CDC 3083-94 / BS512).